The primary structure comprises 156 residues: Large ribosomal subunit protein uL23 (156 aa).

Basic and acidic residues predominate over residues M1–A19. The tract at residues M1–R67 is disordered. A2 carries the n,N,N-trimethylalanine modification. K14 participates in a covalent cross-link: Glycyl lysine isopeptide (Lys-Gly) (interchain with G-Cter in SUMO2). The span at K20–R67 shows a compositional bias: basic residues. Residues V32–Y74 form a beta-like import receptor binding (BIB) domain region. R41 bears the Citrulline mark. S43 carries the phosphoserine modification. T45 is subject to Phosphothreonine. Residue K70 is modified to N6-acetyllysine.

The protein belongs to the universal ribosomal protein uL23 family. As to quaternary structure, component of the large ribosomal subunit. Interacts with LYAR and GNL2. Interacts with MDM2; this interaction may promote MDM2-mediated p53/TP53 polyubiquitination. Directly interacts (via BIB domain) with IPO5, IPO7, KPNB1 and TNPO1; these interactions are involved in RPL23A nuclear import for the assembly of ribosomal subunits. Interacts with IPO8. N-terminus is methylated by METTL11A/NTM1. In terms of processing, citrullinated by PADI4.

The protein localises to the cytoplasm. Its subcellular location is the nucleus. Component of the large ribosomal subunit. The ribosome is a large ribonucleoprotein complex responsible for the synthesis of proteins in the cell. Binds a specific region on the 26S rRNA. May promote p53/TP53 degradation possibly through the stimulation of MDM2-mediated TP53 polyubiquitination. The chain is Large ribosomal subunit protein uL23 (RPL23A) from Oryctolagus cuniculus (Rabbit).